Consider the following 144-residue polypeptide: Cytochrome c oxidase subunit 4 isoform 1, mitochondrial (144 aa).

Residues 1 to 73 (SVVKSEDFSL…SFAEMNRGSN (73 aa)) lie on the Mitochondrial matrix side of the membrane. N6-acetyllysine; alternate is present on K4. K4 bears the N6-succinyllysine; alternate mark. K28 is modified (N6-acetyllysine). Phosphoserine occurs at positions 31 and 33. K35 is modified (N6-acetyllysine; alternate). At K35 the chain carries N6-succinyllysine; alternate. K42 carries the post-translational modification N6-acetyllysine. The helical transmembrane segment at 74-99 (EWKTVVGGAMFFIGFTALVIMWQKHY) threads the bilayer. Topologically, residues 100–144 (VYGPLPQSFDKEWVAKQTKRMLDMKVNPIQGLASKWDYEKNEWKK) are mitochondrial intermembrane.

Belongs to the cytochrome c oxidase IV family. In terms of assembly, component of the cytochrome c oxidase (complex IV, CIV), a multisubunit enzyme composed of 14 subunits. The complex is composed of a catalytic core of 3 subunits MT-CO1, MT-CO2 and MT-CO3, encoded in the mitochondrial DNA, and 11 supernumerary subunits COX4I, COX5A, COX5B, COX6A, COX6B, COX6C, COX7A, COX7B, COX7C, COX8 and NDUFA4, which are encoded in the nuclear genome. The complex exists as a monomer or a dimer and forms supercomplexes (SCs) in the inner mitochondrial membrane with NADH-ubiquinone oxidoreductase (complex I, CI) and ubiquinol-cytochrome c oxidoreductase (cytochrome b-c1 complex, complex III, CIII), resulting in different assemblies (supercomplex SCI(1)III(2)IV(1) and megacomplex MCI(2)III(2)IV(2)). Interacts with PHB2; the interaction decreases in absence of SPHK2. Interacts with AFG1L. Interacts with ABCB7; this interaction allows the regulation of cellular iron homeostasis and cellular reactive oxygen species (ROS) levels in cardiomyocytes. Interacts with FLVCR2; this interaction occurs in the absence of heme and is disrupted upon heme binding. Interacts with IRGC.

Its subcellular location is the mitochondrion inner membrane. It functions in the pathway energy metabolism; oxidative phosphorylation. Its function is as follows. Component of the cytochrome c oxidase, the last enzyme in the mitochondrial electron transport chain which drives oxidative phosphorylation. The respiratory chain contains 3 multisubunit complexes succinate dehydrogenase (complex II, CII), ubiquinol-cytochrome c oxidoreductase (cytochrome b-c1 complex, complex III, CIII) and cytochrome c oxidase (complex IV, CIV), that cooperate to transfer electrons derived from NADH and succinate to molecular oxygen, creating an electrochemical gradient over the inner membrane that drives transmembrane transport and the ATP synthase. Cytochrome c oxidase is the component of the respiratory chain that catalyzes the reduction of oxygen to water. Electrons originating from reduced cytochrome c in the intermembrane space (IMS) are transferred via the dinuclear copper A center (CU(A)) of subunit 2 and heme A of subunit 1 to the active site in subunit 1, a binuclear center (BNC) formed by heme A3 and copper B (CU(B)). The BNC reduces molecular oxygen to 2 water molecules using 4 electrons from cytochrome c in the IMS and 4 protons from the mitochondrial matrix. This Gorilla gorilla gorilla (Western lowland gorilla) protein is Cytochrome c oxidase subunit 4 isoform 1, mitochondrial (COX4I1).